The primary structure comprises 280 residues: Uroporphyrinogen-III C-methyltransferase (280 aa).

Residues Pro-24, 100–102 (GGD), 130–131 (TA), Met-184, Ala-213, and Ala-241 each bind S-adenosyl-L-homocysteine.

The protein belongs to the precorrin methyltransferase family. In terms of assembly, homodimer.

It carries out the reaction uroporphyrinogen III + 2 S-adenosyl-L-methionine = precorrin-2 + 2 S-adenosyl-L-homocysteine + H(+). It catalyses the reaction uroporphyrinogen III + S-adenosyl-L-methionine = precorrin-1 + S-adenosyl-L-homocysteine + H(+). The catalysed reaction is precorrin-1 + S-adenosyl-L-methionine = precorrin-2 + S-adenosyl-L-homocysteine. It functions in the pathway cofactor biosynthesis; adenosylcobalamin biosynthesis; precorrin-2 from uroporphyrinogen III: step 1/1. It participates in porphyrin-containing compound metabolism; siroheme biosynthesis; precorrin-2 from uroporphyrinogen III: step 1/1. With respect to regulation, S-adenosylhomocysteine is an extremely powerful competitive inhibitor of the uroporphyrinogen III methylation. SUMT exhibits a substrate inhibition phenomenon at uroporphyrinogen III concentrations above 2 uM; this property might play a regulatory role in cobalamin biosynthesis. The enzyme activity is completely insensitive to feedback inhibition by cobalamin and corrinoid intermediates. Its function is as follows. Catalyzes the two successive C-2 and C-7 methylation reactions involved in the conversion of uroporphyrinogen III to precorrin-2 via the intermediate formation of precorrin-1. It is a step in the biosynthesis of both cobalamin (vitamin B12) and siroheme. Neither uroporphyrin III nor the chlorin (factor I) is a substrate of SUMT. The sequence is that of Uroporphyrinogen-III C-methyltransferase from Sinorhizobium sp.